The chain runs to 404 residues: S-adenosylmethionine synthase (404 aa).

Residue H18 coordinates ATP. D20 contacts Mg(2+). E46 serves as a coordination point for K(+). L-methionine contacts are provided by E59 and Q102. The tract at residues 102-112 (QSPEIAQGVDH) is flexible loop. ATP is bound by residues 178-180 (DGK), 249-250 (KF), D258, 264-265 (RK), A281, and K285. D258 lines the L-methionine pocket. L-methionine is bound at residue K289.

Belongs to the AdoMet synthase family. In terms of assembly, homotetramer; dimer of dimers. Requires Mg(2+) as cofactor. The cofactor is K(+).

Its subcellular location is the cytoplasm. It carries out the reaction L-methionine + ATP + H2O = S-adenosyl-L-methionine + phosphate + diphosphate. It functions in the pathway amino-acid biosynthesis; S-adenosyl-L-methionine biosynthesis; S-adenosyl-L-methionine from L-methionine: step 1/1. Catalyzes the formation of S-adenosylmethionine (AdoMet) from methionine and ATP. The overall synthetic reaction is composed of two sequential steps, AdoMet formation and the subsequent tripolyphosphate hydrolysis which occurs prior to release of AdoMet from the enzyme. The sequence is that of S-adenosylmethionine synthase from Rhodococcus jostii (strain RHA1).